Consider the following 209-residue polypeptide: Large ribosomal subunit protein uL3 (209 aa).

Q150 bears the N5-methylglutamine mark.

Belongs to the universal ribosomal protein uL3 family. As to quaternary structure, part of the 50S ribosomal subunit. Forms a cluster with proteins L14 and L19. In terms of processing, methylated by PrmB.

Its function is as follows. One of the primary rRNA binding proteins, it binds directly near the 3'-end of the 23S rRNA, where it nucleates assembly of the 50S subunit. The protein is Large ribosomal subunit protein uL3 of Escherichia coli O139:H28 (strain E24377A / ETEC).